Here is a 241-residue protein sequence, read N- to C-terminus: Tumor necrosis factor receptor superfamily member grnd (241 aa).

The first 27 residues, Met1 to Ala27, serve as a signal peptide directing secretion. The Extracellular portion of the chain corresponds to Ala28–Gln98. Intrachain disulfides connect Cys35/Cys47, Cys40/Cys54, Cys57/Cys77, and Cys61/Cys73. Asn63 carries an N-linked (GlcNAc...) asparagine glycan. A helical membrane pass occupies residues Leu99–Phe119. The Cytoplasmic segment spans residues Leu120 to Phe241.

As to quaternary structure, interacts (via extracellular cysteine-rich domain) with egr (via secreted TNF-homology soluble form); forms heterohexamers when 3 copies associate with egr trimers. Interacts with Traf6/TRAF2 and veli (via PDZ domain). N-glycosylated on Asn-63. Glycosylation regulates ligand binding, specifically reducing affinity for the TNF egr, thereby inhibiting activation of JNK signaling. In terms of tissue distribution, expressed in the adult midgut; under normal conditions expressed at lower levels than the other TNF receptor wgn.

The protein localises to the apical cell membrane. The protein resides in the cytoplasmic vesicle membrane. Functionally, acts as a receptor for TNF-cytokine egr. Plays a role in activation of JNK signaling and is required for egr-induced apoptosis, including in wing imaginal discs during development. May also play an egr-independent role in cell proliferation. TNF receptor involved in triggering JNK-dependent proliferation of the enteroblast-enterocyte lineage in response to stress-induced release of egr by intestinal stem cells and enteroblasts. Involved in regulation of insulin production in response to dietary protein shortage keeping systemic growth in check. Activation in brain insulin producing cells through binding of egr released into the hemolymph in response to dietary amino acid shortage, results in JNK-dependent inhibition of insulin production. The chain is Tumor necrosis factor receptor superfamily member grnd from Drosophila melanogaster (Fruit fly).